We begin with the raw amino-acid sequence, 280 residues long: MAQIDGLPPLREVIAAHKLSAKKSLGQNFLLDLNLTARIARVPGDLSGADVLEVGPGPGGLTRGLLAEGARKVLAIEKDARCLPALQQIAAAYPGRLEVIEGDALEVDATAYLSPPIHIAANLPYNVGTELLVRWLTPPDWPPFWRTLTLMFQREVAERIVAKPGSKAYGRLAILAQWRAEAEIALTLPPQAFIPAPKVHSAVVHLRARTEPRYPADAAVLSRVVATAFNQRRKMLRASLKGLTPGIEDHLAAVGIDPTRRAETLSLEEFCALARQIAAG.

S-adenosyl-L-methionine contacts are provided by Asn-28, Leu-30, Gly-55, Glu-77, Asp-103, and Asn-122.

This sequence belongs to the class I-like SAM-binding methyltransferase superfamily. rRNA adenine N(6)-methyltransferase family. RsmA subfamily.

It localises to the cytoplasm. It carries out the reaction adenosine(1518)/adenosine(1519) in 16S rRNA + 4 S-adenosyl-L-methionine = N(6)-dimethyladenosine(1518)/N(6)-dimethyladenosine(1519) in 16S rRNA + 4 S-adenosyl-L-homocysteine + 4 H(+). Functionally, specifically dimethylates two adjacent adenosines (A1518 and A1519) in the loop of a conserved hairpin near the 3'-end of 16S rRNA in the 30S particle. May play a critical role in biogenesis of 30S subunits. The sequence is that of Ribosomal RNA small subunit methyltransferase A from Dinoroseobacter shibae (strain DSM 16493 / NCIMB 14021 / DFL 12).